Here is a 417-residue protein sequence, read N- to C-terminus: Serine hydroxymethyltransferase (417 aa).

Residues leucine 121 and glycine 125–leucine 127 contribute to the (6S)-5,6,7,8-tetrahydrofolate site. N6-(pyridoxal phosphate)lysine is present on lysine 229. Serine 355–phenylalanine 357 provides a ligand contact to (6S)-5,6,7,8-tetrahydrofolate.

Belongs to the SHMT family. As to quaternary structure, homodimer. It depends on pyridoxal 5'-phosphate as a cofactor.

Its subcellular location is the cytoplasm. The catalysed reaction is (6R)-5,10-methylene-5,6,7,8-tetrahydrofolate + glycine + H2O = (6S)-5,6,7,8-tetrahydrofolate + L-serine. It functions in the pathway one-carbon metabolism; tetrahydrofolate interconversion. The protein operates within amino-acid biosynthesis; glycine biosynthesis; glycine from L-serine: step 1/1. In terms of biological role, catalyzes the reversible interconversion of serine and glycine with tetrahydrofolate (THF) serving as the one-carbon carrier. This reaction serves as the major source of one-carbon groups required for the biosynthesis of purines, thymidylate, methionine, and other important biomolecules. Also exhibits THF-independent aldolase activity toward beta-hydroxyamino acids, producing glycine and aldehydes, via a retro-aldol mechanism. This is Serine hydroxymethyltransferase from Stenotrophomonas maltophilia (strain R551-3).